A 253-amino-acid chain; its full sequence is Small ribosomal subunit protein uS3 (253 aa).

The KH type-2 domain maps to 39 to 109 (IRNYVLARLK…EVKIDVVEVI (71 aa)). The tract at residues 220–253 (DEMKKMKDRRNDGGAKGRDSRDNRSKRRSRSKRS) is disordered. A compositionally biased stretch (basic and acidic residues) spans 221–242 (EMKKMKDRRNDGGAKGRDSRDN). Over residues 243 to 253 (RSKRRSRSKRS) the composition is skewed to basic residues.

This sequence belongs to the universal ribosomal protein uS3 family. Part of the 30S ribosomal subunit. Forms a tight complex with proteins S10 and S14.

In terms of biological role, binds the lower part of the 30S subunit head. Binds mRNA in the 70S ribosome, positioning it for translation. The polypeptide is Small ribosomal subunit protein uS3 (Chlorobium chlorochromatii (strain CaD3)).